The chain runs to 192 residues: Ubiquitin-conjugating enzyme E2 T (192 aa).

Positions 2-152 constitute a UBC core domain; sequence QRVSRLKREL…AKKWTEKHAL (151 aa). The active-site Glycyl thioester intermediate is the C86. Positions 150-192 are disordered; that stretch reads HALPAPQGSDKESQEKSGSSEGTSHKRKSAEIAEESKKPCREP. Residues 178-192 show a composition bias toward basic and acidic residues; that stretch reads SAEIAEESKKPCREP.

Belongs to the ubiquitin-conjugating enzyme family.

Its subcellular location is the nucleus. It catalyses the reaction S-ubiquitinyl-[E1 ubiquitin-activating enzyme]-L-cysteine + [E2 ubiquitin-conjugating enzyme]-L-cysteine = [E1 ubiquitin-activating enzyme]-L-cysteine + S-ubiquitinyl-[E2 ubiquitin-conjugating enzyme]-L-cysteine.. Its pathway is protein modification; protein ubiquitination. Functionally, accepts ubiquitin from the E1 complex and catalyzes its covalent attachment to other proteins. Catalyzes monoubiquitination. Involved in DNA repair. The chain is Ubiquitin-conjugating enzyme E2 T (ube2t) from Xenopus laevis (African clawed frog).